We begin with the raw amino-acid sequence, 355 residues long: uncharacterized protein (355 aa).

Positions 1–104 are disordered; that stretch reads MGTKGLPLYP…EQAKTVQGGR (104 aa). K19 carries the post-translational modification N6-acetyllysine. A compositionally biased stretch (acidic residues) spans 45 to 54; it reads EEGTDLEGDM. Position 175 is a phosphoserine (S175). 2 disordered regions span residues 247–310 and 325–355; these read PRGS…AAYK and SITS…GKKP. Y293 is subject to Phosphotyrosine. Residue S294 is modified to Phosphoserine. Polar residues predominate over residues 325 to 334; the sequence is SITSLSSRTT. Low complexity predominate over residues 336 to 348; it reads LPAADPFALAPFP.

This is an uncharacterized protein from Homo sapiens (Human).